The following is a 142-amino-acid chain: uncharacterized protein (142 aa).

This is an uncharacterized protein from Acanthamoeba polyphaga (Amoeba).